A 214-amino-acid polypeptide reads, in one-letter code: Methyltransferase HEMK2 (214 aa).

S-adenosyl-L-homocysteine is bound by residues threonine 29, glutamate 51, glycine 53, aspartate 77, aspartate 103, leucine 104, and asparagine 122. 7 residues coordinate S-adenosyl-L-methionine: threonine 29, glutamate 51, glycine 53, aspartate 77, aspartate 103, leucine 104, and asparagine 122. Asparagine 122 provides a ligand contact to a protein.

It belongs to the eukaryotic/archaeal PrmC-related family. Heterodimer; heterodimerization with TRMT112 is required for S-adenosyl-L-methionine-binding. In terms of assembly, does not interact with TRMT112. Ubiquitinated, leading to its degradation by the proteasome. As to expression, widely expressed, with highest expression in parathyroid and pituitary glands, followed by adrenal gland and kidney, and lowest expression in leukocytes and mammary gland.

The protein resides in the nucleus. The catalysed reaction is L-lysyl-[histone] + S-adenosyl-L-methionine = N(6)-methyl-L-lysyl-[histone] + S-adenosyl-L-homocysteine + H(+). The enzyme catalyses L-glutaminyl-[protein] + S-adenosyl-L-methionine = N(5)-methyl-L-glutaminyl-[protein] + S-adenosyl-L-homocysteine + H(+). It catalyses the reaction methylarsonous acid + S-adenosyl-L-methionine = dimethylarsinate + S-adenosyl-L-homocysteine + 2 H(+). Methyltransferase that can methylate proteins and, to a lower extent, arsenic. Catalytic subunit of a heterodimer with TRMT112, which monomethylates 'Lys-12' of histone H4 (H4K12me1), a modification present at the promoters of numerous genes encoding cell cycle regulators. Catalytic subunit of a heterodimer with TRMT112, which catalyzes N5-methylation of Glu residue of proteins with a Gly-Gln-Xaa-Xaa-Xaa-Arg motif. Methylates ETF1 on 'Gln-185'; ETF1 needs to be complexed to ERF3 in its GTP-bound form to be efficiently methylated. May also play a role in the modulation of arsenic-induced toxicity by mediating the conversion of monomethylarsonous acid (3+) into the less toxic dimethylarsonic acid. It however only plays a limited role in arsenic metabolism compared with AS3MT. This chain is Methyltransferase HEMK2, found in Homo sapiens (Human).